The following is a 730-amino-acid chain: Elongation factor 2 (730 aa).

The tr-type G domain maps to 19 to 228 (QRIRNIGIVA…TGVSFKDVYD (210 aa)). GTP-binding positions include 28–35 (AHIDHGKT), 94–98 (DTPGH), and 148–151 (NKVD). Residue H596 is modified to Diphthamide.

The protein belongs to the TRAFAC class translation factor GTPase superfamily. Classic translation factor GTPase family. EF-G/EF-2 subfamily.

Its subcellular location is the cytoplasm. In terms of biological role, catalyzes the GTP-dependent ribosomal translocation step during translation elongation. During this step, the ribosome changes from the pre-translocational (PRE) to the post-translocational (POST) state as the newly formed A-site-bound peptidyl-tRNA and P-site-bound deacylated tRNA move to the P and E sites, respectively. Catalyzes the coordinated movement of the two tRNA molecules, the mRNA and conformational changes in the ribosome. The chain is Elongation factor 2 from Methanosarcina acetivorans (strain ATCC 35395 / DSM 2834 / JCM 12185 / C2A).